The primary structure comprises 444 residues: EMI domain-containing protein 1 (444 aa).

Residues 1–22 (MGGPRAWTLLCLGLLLPGGGAA) form the signal peptide. An EMI domain is found at 33–106 (RRNWCSYVVT…PGHSGVTCEE (74 aa)). Disulfide bonds link Cys-37–Cys-96, Cys-62–Cys-68, and Cys-95–Cys-104. Thr-42 is a glycosylation site (O-linked (Fuc) threonine). Residue Asn-51 is glycosylated (N-linked (GlcNAc...) asparagine). Asn-136 carries N-linked (GlcNAc...) asparagine glycosylation. Disordered regions lie at residues 161-374 (EQTV…KSHW) and 404-444 (PDLG…SERS). The 151-residue stretch at 221–371 (GPPGPQGPPG…PGPKGDPGEK (151 aa)) folds into the Collagen-like domain. The segment covering 222–231 (PPGPQGPPGR) has biased composition (pro residues). The segment covering 232–243 (PGQTGAAGTPGK) has biased composition (low complexity). Composition is skewed to pro residues over residues 244–264 (MGPP…PVGP) and 292–311 (PTGP…PGLP).

In terms of assembly, homo- or heteromers. O-fucosylated at Thr-42 within the EMI domain by FUT10/POFUT3 and FUT11/POFUT4.

It localises to the secreted. Its subcellular location is the extracellular space. It is found in the extracellular matrix. The chain is EMI domain-containing protein 1 (Emid1) from Mus musculus (Mouse).